Consider the following 366-residue polypeptide: Anhydro-N-acetylmuramic acid kinase (366 aa).

10 to 17 (GTSMDGID) contributes to the ATP binding site.

Belongs to the anhydro-N-acetylmuramic acid kinase family.

It carries out the reaction 1,6-anhydro-N-acetyl-beta-muramate + ATP + H2O = N-acetyl-D-muramate 6-phosphate + ADP + H(+). It functions in the pathway amino-sugar metabolism; 1,6-anhydro-N-acetylmuramate degradation. Its pathway is cell wall biogenesis; peptidoglycan recycling. Functionally, catalyzes the specific phosphorylation of 1,6-anhydro-N-acetylmuramic acid (anhMurNAc) with the simultaneous cleavage of the 1,6-anhydro ring, generating MurNAc-6-P. Is required for the utilization of anhMurNAc either imported from the medium or derived from its own cell wall murein, and thus plays a role in cell wall recycling. The protein is Anhydro-N-acetylmuramic acid kinase of Legionella pneumophila (strain Paris).